Here is a 112-residue protein sequence, read N- to C-terminus: UPF0060 membrane protein AAur_4166 (112 aa).

Helical transmembrane passes span 8–28 (ILFV…WQAV), 33–53 (AWWW…FAAF), 62–82 (VLAA…MLMD), and 91–111 (VIGA…PRPG).

The protein belongs to the UPF0060 family.

The protein localises to the cell membrane. In Paenarthrobacter aurescens (strain TC1), this protein is UPF0060 membrane protein AAur_4166.